The chain runs to 130 residues: Small ribosomal subunit protein uS11 (130 aa).

The protein belongs to the universal ribosomal protein uS11 family. As to quaternary structure, part of the 30S ribosomal subunit. Interacts with proteins S7 and S18. Binds to IF-3.

In terms of biological role, located on the platform of the 30S subunit, it bridges several disparate RNA helices of the 16S rRNA. Forms part of the Shine-Dalgarno cleft in the 70S ribosome. The polypeptide is Small ribosomal subunit protein uS11 (Synechococcus sp. (strain CC9605)).